A 357-amino-acid chain; its full sequence is GTPase Obg (357 aa).

One can recognise an Obg domain in the interval 1–158; the sequence is MFVDNIKLKV…LEIVLELKLI (158 aa). The OBG-type G domain occupies 159–345; sequence ADVGLVGFPN…LKFALFDLVE (187 aa). GTP is bound by residues 165 to 172, 190 to 194, 212 to 215, 280 to 283, and 326 to 328; these read GFPNAGKS, FTTLT, DIPG, TKCD, and SSV. Mg(2+)-binding residues include serine 172 and threonine 192.

The protein belongs to the TRAFAC class OBG-HflX-like GTPase superfamily. OBG GTPase family. As to quaternary structure, monomer. The cofactor is Mg(2+).

The protein localises to the cytoplasm. In terms of biological role, an essential GTPase which binds GTP, GDP and possibly (p)ppGpp with moderate affinity, with high nucleotide exchange rates and a fairly low GTP hydrolysis rate. Plays a role in control of the cell cycle, stress response, ribosome biogenesis and in those bacteria that undergo differentiation, in morphogenesis control. This is GTPase Obg from Nautilia profundicola (strain ATCC BAA-1463 / DSM 18972 / AmH).